The following is a 213-amino-acid chain: ATP phosphoribosyltransferase (213 aa).

Belongs to the ATP phosphoribosyltransferase family. Short subfamily. Heteromultimer composed of HisG and HisZ subunits.

The protein localises to the cytoplasm. The enzyme catalyses 1-(5-phospho-beta-D-ribosyl)-ATP + diphosphate = 5-phospho-alpha-D-ribose 1-diphosphate + ATP. The protein operates within amino-acid biosynthesis; L-histidine biosynthesis; L-histidine from 5-phospho-alpha-D-ribose 1-diphosphate: step 1/9. Catalyzes the condensation of ATP and 5-phosphoribose 1-diphosphate to form N'-(5'-phosphoribosyl)-ATP (PR-ATP). Has a crucial role in the pathway because the rate of histidine biosynthesis seems to be controlled primarily by regulation of HisG enzymatic activity. The protein is ATP phosphoribosyltransferase of Methylococcus capsulatus (strain ATCC 33009 / NCIMB 11132 / Bath).